The chain runs to 770 residues: Protein PAT1 homolog 1 (770 aa).

The tract at residues 1–26 is disordered; the sequence is MFRYESLEDCPLDEDEDAFQGLGEED. Residues 1 to 84 form a region A; interaction with DDX6/RCK region; it reads MFRYESLEDC…EMDLLGDHEE (84 aa). Residues 1–397 are involved in nuclear foci localization; the sequence is MFRYESLEDC…HRSSHQDHLR (397 aa). A compositionally biased stretch (acidic residues) spans 7 to 26; sequence LEDCPLDEDEDAFQGLGEED. The tract at residues 85-388 is region N; interaction with decapping machinery; sequence NLAERLSKMV…LNGAGDRGSH (304 aa). The Nuclear export signal signature appears at 86 to 95; that stretch reads LAERLSKMVI. Position 177 is a phosphoserine (S177). T178 carries the post-translational modification Phosphothreonine. 2 positions are modified to phosphoserine: S179 and S184. Position 194 is a phosphothreonine (T194). R217, R223, and R263 each carry asymmetric dimethylarginine. Residues 223 to 397 form an involved in RNA-binding region; sequence RYPAPYGERM…HRSSHQDHLR (175 aa). Residue S278 is modified to Phosphoserine. R284 is subject to Asymmetric dimethylarginine. Residues 314 to 323 show a composition bias toward low complexity; sequence GFRAFFSAPP. 2 disordered regions span residues 314 to 344 and 360 to 399; these read GFRAFFSAPPSATPPPQQHPPGPGPHLQNLR and QHRRLLHQRQQQNRSQHRNLNGAGDRGSHRSSHQDHLRKD. The segment covering 324–337 has biased composition (pro residues); it reads SATPPPQQHPPGPG. Low complexity predominate over residues 367–380; that stretch reads QRQQQNRSQHRNLN. Omega-N-methylarginine is present on R385. The segment covering 385-399 has biased composition (basic and acidic residues); sequence RGSHRSSHQDHLRKD. Residues 389–448 form a region H region; the sequence is RSSHQDHLRKDPYANLMLQREKDWVSKIQMMQLQSTDPYLDDFYYQNYFEKLEKLSAAEE. An involved in nuclear speckle localization region spans residues 398-770; sequence KDPYANLMLQ…TKLQLVQGIR (373 aa). The region C stretch occupies residues 449 to 770; that stretch reads IQGDGPKKER…TKLQLVQGIR (322 aa).

This sequence belongs to the PAT1 family. As to quaternary structure, interacts (via region A) with DDX6/RCK. Interacts (via region H and region C) with LSM1 and LSM4. Interacts (via region N) with DCP1A, DCP2, EDC3, EDC4 and XRN1. Interacts with the CCR4-NOT complex. Interacts with the Lsm-containing SMN-Sm protein complex. Interacts with EIF4ENIF1/4E-T. As to expression, ubiquitous.

The protein resides in the cytoplasm. Its subcellular location is the P-body. It localises to the nucleus. It is found in the PML body. The protein localises to the nucleus speckle. Its function is as follows. RNA-binding protein involved in deadenylation-dependent decapping of mRNAs, leading to the degradation of mRNAs. Acts as a scaffold protein that connects deadenylation and decapping machinery. Required for cytoplasmic mRNA processing body (P-body) assembly. Functionally, (Microbial infection) In case of infection, required for translation and replication of hepatitis C virus (HCV). In Homo sapiens (Human), this protein is Protein PAT1 homolog 1 (PATL1).